We begin with the raw amino-acid sequence, 250 residues long: DNA repair protein RecO (250 aa).

Belongs to the RecO family.

Its function is as follows. Involved in DNA repair and RecF pathway recombination. The chain is DNA repair protein RecO from Lactobacillus acidophilus (strain ATCC 700396 / NCK56 / N2 / NCFM).